Consider the following 339-residue polypeptide: Glycerol-3-phosphate dehydrogenase [NAD(P)+] (339 aa).

Residues S15, Y16, H36, and K110 each contribute to the NADPH site. 3 residues coordinate sn-glycerol 3-phosphate: K110, G139, and T141. Residue A143 participates in NADPH binding. Sn-glycerol 3-phosphate is bound by residues K195, D248, S258, R259, and N260. Residue K195 is the Proton acceptor of the active site. An NADPH-binding site is contributed by R259. Positions 283 and 285 each coordinate NADPH.

Belongs to the NAD-dependent glycerol-3-phosphate dehydrogenase family.

It is found in the cytoplasm. It catalyses the reaction sn-glycerol 3-phosphate + NAD(+) = dihydroxyacetone phosphate + NADH + H(+). The catalysed reaction is sn-glycerol 3-phosphate + NADP(+) = dihydroxyacetone phosphate + NADPH + H(+). The protein operates within membrane lipid metabolism; glycerophospholipid metabolism. Its function is as follows. Catalyzes the reduction of the glycolytic intermediate dihydroxyacetone phosphate (DHAP) to sn-glycerol 3-phosphate (G3P), the key precursor for phospholipid synthesis. This is Glycerol-3-phosphate dehydrogenase [NAD(P)+] from Enterobacter sp. (strain 638).